Here is a 253-residue protein sequence, read N- to C-terminus: Ubiquinone/menaquinone biosynthesis C-methyltransferase UbiE (253 aa).

S-adenosyl-L-methionine is bound by residues threonine 76, aspartate 97, and 125–126 (DA).

The protein belongs to the class I-like SAM-binding methyltransferase superfamily. MenG/UbiE family.

The catalysed reaction is a 2-demethylmenaquinol + S-adenosyl-L-methionine = a menaquinol + S-adenosyl-L-homocysteine + H(+). The enzyme catalyses a 2-methoxy-6-(all-trans-polyprenyl)benzene-1,4-diol + S-adenosyl-L-methionine = a 5-methoxy-2-methyl-3-(all-trans-polyprenyl)benzene-1,4-diol + S-adenosyl-L-homocysteine + H(+). Its pathway is quinol/quinone metabolism; menaquinone biosynthesis; menaquinol from 1,4-dihydroxy-2-naphthoate: step 2/2. The protein operates within cofactor biosynthesis; ubiquinone biosynthesis. Methyltransferase required for the conversion of demethylmenaquinol (DMKH2) to menaquinol (MKH2) and the conversion of 2-polyprenyl-6-methoxy-1,4-benzoquinol (DDMQH2) to 2-polyprenyl-3-methyl-6-methoxy-1,4-benzoquinol (DMQH2). This is Ubiquinone/menaquinone biosynthesis C-methyltransferase UbiE from Azotobacter vinelandii (strain DJ / ATCC BAA-1303).